The following is a 119-amino-acid chain: Large ribosomal subunit protein bL20 (119 aa).

This sequence belongs to the bacterial ribosomal protein bL20 family.

Its function is as follows. Binds directly to 23S ribosomal RNA and is necessary for the in vitro assembly process of the 50S ribosomal subunit. It is not involved in the protein synthesizing functions of that subunit. This is Large ribosomal subunit protein bL20 from Cellvibrio japonicus (strain Ueda107) (Pseudomonas fluorescens subsp. cellulosa).